The following is a 25-amino-acid chain: Retinol-binding protein 3 (25 aa).

The protein resides in the secreted. Its subcellular location is the extracellular space. It is found in the extracellular matrix. It localises to the interphotoreceptor matrix. Functionally, IRBP shuttles 11-cis and all trans retinoids between the retinol isomerase in the pigment epithelium and the visual pigments in the photoreceptor cells of the retina. This Sus scrofa (Pig) protein is Retinol-binding protein 3 (RBP3).